The chain runs to 1275 residues: MSSPKWTKEQLEVIESRECNLLVAAAAGSGKTAVLVERIIQMITSRENPIDIDKLLVVTFTNAAASEMRERIGDAIGKALDENPENKHLQNQLVLLNKSSITTIHSFCLDVIKSNFHRINLDPNFRIGDQTECAILKQEAIEEVFEDLYEERDEGFLNLVESYAERGGDKEVQDIILGIYSFAMASPEPKKWLIDSAERFNIDENFDFSQSIWARAILDTVKIEINGLCLNMERALKEVESIEELETFAEKLSVEYKKIADISQACNKSWDEAYKKMASMSFENYVKGVKRISKDAPSYIKESKEKAKTIRDKTKKSLESIVSATFNKDNDSIREEIKYLYNIVKPISSVVLRFEEEYSNKKREKGIIDFNDIEHFALNILTDVDEKGNIVPSDIAVGYRNKFYEIFIDEYQDSNLVQEVLLKAVANTETPNRFMVGDVKQSIYRFRQAKPELFLQKYNNYNDKKGSSHRKIMLYKNFRSREEVVDAVNYIFENIMNENIGEIEYTEKERLNLGANFNVDTDEKSIIGGATEIHLIQKDNKLDDDIINDKDDRINNKENEIEEEEKLDNIQLEARMVGNIIKDLMKVNEDGKIQKVYDKGIDGYRPVEFRDIVILLRATSAWAPVFADELMNMDIPTYADVGVGYFDTIEIKTILSLLQIIDNPMQDIPLISVLKSPIFGFTPEDLIDIRVQSKDKIFYEVLKSTAEYDGFTDSQNENESEFIPSEECINKSKDFLIKLKEFKEKSMYMSTDEFIWYLYTRTGYYAYVGALPGGSQRQANLKVLFERAKQFEETSLKGIFNFVNFIEKLKKSSSDMGSAKTLGENANVVRIMSIHKSKGLEFPVVICSAMGKNFNTQDFKKSILYHHNLGYGPQFVDYERRISFPSIAKEALKSKINIENLSEEMRVLYVAFTRAKEKLIITGSTRNIQDSIKRWSNGIESLDTISQYEILKGKNFLDWIMPCVLRHRDLSNLLEEVGLDAVFNVEHNSKWYGKLWNKNDILVEKKSDEEKESIEEILEKIDVNNPDSDYYGEIEEKLNYIYPYEFSTRKPATISVTEIKKIQNNYEEELINTIFEQKVILKKPLFIQNEEEREKISGTERGTIVHLVMEVLDLKNVSSVNDIKSQIRGFVSKGIITEKQASIVNPYKIYKFFASNIGKRMLNAEIINREKSIYAQVNMKDIYIYEKLINNDDKKLYDNESVMLRGIVDAYFEEDNQIVLVDYKTDFVNEENINQIIEKYKKQLDLYADIIETLTGKSVKEKCIYLFGVDEAVCY.

The UvrD-like helicase ATP-binding domain occupies 4–481 (PKWTKEQLEV…IMLYKNFRSR (478 aa)). ATP is bound at residue 25 to 32 (AAAGSGKT). Residues 531–839 (TEIHLIQKDN…RIMSIHKSKG (309 aa)) enclose the UvrD-like helicase C-terminal domain.

It belongs to the helicase family. AddA subfamily. As to quaternary structure, heterodimer of AddA and AddB/RexB. Mg(2+) is required as a cofactor.

The catalysed reaction is Couples ATP hydrolysis with the unwinding of duplex DNA by translocating in the 3'-5' direction.. The enzyme catalyses ATP + H2O = ADP + phosphate + H(+). The heterodimer acts as both an ATP-dependent DNA helicase and an ATP-dependent, dual-direction single-stranded exonuclease. Recognizes the chi site generating a DNA molecule suitable for the initiation of homologous recombination. The AddA nuclease domain is required for chi fragment generation; this subunit has the helicase and 3' -&gt; 5' nuclease activities. The protein is ATP-dependent helicase/nuclease subunit A of Clostridioides difficile (strain 630) (Peptoclostridium difficile).